The following is a 521-amino-acid chain: Transcription activator of gluconeogenesis SS1G_02293 (521 aa).

Residues 1-12 (MSGETEIDDPEV) are compositionally biased toward acidic residues. The disordered stretch occupies residues 1–75 (MSGETEIDDP…KFDPKDPLRP (75 aa)). Basic and acidic residues-rich tracts occupy residues 21 to 49 (YSDHEQELDVVGKEDDNQEMAEQKVRPDG) and 65 to 74 (PKFDPKDPLR). The zn(2)-C6 fungal-type DNA-binding region spans 84 to 112 (CFACQRAHLTCGDERPCQRCIKRGLADAC). Disordered regions lie at residues 273–308 (SGSAETPPQDSSAGMPQNVGDLGYNNNPAFNNNPPF), 322–358 (VAPPGAHRPAKRQDTKSGPSGKLGPSSALGKRNRDPS), and 478–501 (NTGNSGASSSGSSGRGSFTTPRMR). The span at 275-287 (SAETPPQDSSAGM) shows a compositional bias: polar residues. 3 stretches are compositionally biased toward low complexity: residues 297–308 (NNNPAFNNNPPF), 337–351 (KSGPSGKLGPSSALG), and 480–494 (GNSGASSSGSSGRGS). Residues 426–497 (TLFEYEDFML…GSSGRGSFTT (72 aa)) enclose the PAS domain.

The protein belongs to the ERT1/acuK family.

The protein resides in the nucleus. In terms of biological role, transcription factor which regulates nonfermentable carbon utilization. Activator of gluconeogenetic genes. This is Transcription activator of gluconeogenesis SS1G_02293 from Sclerotinia sclerotiorum (strain ATCC 18683 / 1980 / Ss-1) (White mold).